The chain runs to 920 residues: Vacuolar membrane protease (920 aa).

The Cytoplasmic segment spans residues 1–20; that stretch reads MASSRAQRFNPIAFTPWPVT. The chain crosses the membrane as a helical span at residues 21 to 41; it reads CITTIVYLALLIPILVINLVV. Over 42-378 the chain is Vacuolar; that stretch reads PSAPETNPKG…AFAVFRLHTL (337 aa). N-linked (GlcNAc...) asparagine glycosylation is found at Asn-53, Asn-116, and Asn-119. Residues His-175 and Asp-187 each contribute to the Zn(2+) site. Glu-221 acts as the Proton acceptor in catalysis. Residue Glu-222 participates in Zn(2+) binding. The N-linked (GlcNAc...) asparagine glycan is linked to Asn-238. Residues Glu-247 and His-306 each contribute to the Zn(2+) site. The helical transmembrane segment at 379–399 threads the bilayer; that stretch reads FAISVALLVIAPLVIFITSVI. The Cytoplasmic segment spans residues 400–433; that stretch reads LSKTDRMYLFSMSKSLEGTGDQVSLRGLRGFSRT. The helical transmembrane segment at 434–454 threads the bilayer; it reads PIILVIATTIPICLAYLLEKV. At 455–463 the chain is on the vacuolar side; that stretch reads NPYIVHSSQ. A helical transmembrane segment spans residues 464 to 484; it reads FSVWSMMFSAWIFLAWFLACA. The Cytoplasmic segment spans residues 485–495; that stretch reads ADFFRPSALHR. A helical transmembrane segment spans residues 496 to 516; sequence AYSYTWIFVATWIMLVINTVY. The Vacuolar segment spans residues 517–520; that stretch reads ANQK. A helical membrane pass occupies residues 521–541; sequence GIAAGYFLLFYFAGAFLATWI. At 542–659 the chain is on the cytoplasmic side; sequence SYLELFALPR…TLPRWTWVLQ (118 aa). The segment at 556–605 is disordered; that stretch reads ARQTTGRRPSSLSSRLLTSSADELRSNASPSTAEFPGAAGEDTDPTESTS. Residues 559 to 575 show a composition bias toward low complexity; that stretch reads TTGRRPSSLSSRLLTSS. A helical membrane pass occupies residues 660–680; sequence LLLLAPIVLILVGQLALFLTA. The Vacuolar portion of the chain corresponds to 681 to 693; that stretch reads SMCQVGSDGVSTF. A helical membrane pass occupies residues 694 to 714; sequence VVYLACAVFTTLLCIPLFPLI. At 715 to 720 the chain is on the cytoplasmic side; it reads HRFTYH. The chain crosses the membrane as a helical span at residues 721–741; the sequence is IPTFLFLVFIGTLIYNLVAFP. The Vacuolar portion of the chain corresponds to 742 to 920; it reads FSPANRLKTF…VEASHSFTIQ (179 aa). N-linked (GlcNAc...) asparagine glycosylation is found at Asn-760, Asn-788, and Asn-832.

This sequence belongs to the peptidase M28 family. Zn(2+) is required as a cofactor.

It localises to the vacuole membrane. May be involved in vacuolar sorting and osmoregulation. The chain is Vacuolar membrane protease from Ajellomyces capsulatus (strain H143) (Darling's disease fungus).